Here is a 116-residue protein sequence, read N- to C-terminus: MFEAKKSAKATLRMIKISPRKLNLITGLIRNLKVSDAIMQLKFSKKRAAVDVKKCLQSAIANAENNDGLDIDNLVVLEAIVGKGSVMKRLVPRARGKAFRIKKFFSNLYITVSEIK.

This sequence belongs to the universal ribosomal protein uL22 family. Part of the 50S ribosomal subunit.

In terms of biological role, this protein binds specifically to 23S rRNA; its binding is stimulated by other ribosomal proteins, e.g. L4, L17, and L20. It is important during the early stages of 50S assembly. It makes multiple contacts with different domains of the 23S rRNA in the assembled 50S subunit and ribosome. Functionally, the globular domain of the protein is located near the polypeptide exit tunnel on the outside of the subunit, while an extended beta-hairpin is found that lines the wall of the exit tunnel in the center of the 70S ribosome. The protein is Large ribosomal subunit protein uL22 of Orientia tsutsugamushi (strain Boryong) (Rickettsia tsutsugamushi).